Reading from the N-terminus, the 324-residue chain is Integrin-binding sialoprotein (324 aa).

A signal peptide spans 1–16; the sequence is MKTALILLSILGMACA. Phosphoserine occurs at positions 31, 67, 75, 76, and 95. 2 disordered regions span residues 60–228 and 243–263; these read VQGG…GREL and QQTTPPPEAYGTTSPPIRKSS. A compositionally biased stretch (acidic residues) spans 66 to 105; that stretch reads SSEENGDGDSSEEEGEEEETSNEEENNEDSEGNEDQEAEA. Polar residues predominate over residues 106-130; sequence ENSTLSTLSGVTASYGAETTPQAQT. A glycan (N-linked (GlcNAc...) asparagine) is linked at Asn107. Basic and acidic residues predominate over residues 141-154; that stretch reads KAGDAESRAPKVKE. Ser155 is modified (phosphoserine). The span at 155–179 shows a compositional bias: acidic residues; that stretch reads SDEEEEEEEEEEENENEEAEVDENE. 3 N-linked (GlcNAc...) asparagine glycosylation sites follow: Asn183, Asn188, and Asn196. Over residues 203–213 the composition is skewed to acidic residues; the sequence is NGEEAEAEEAS. Positions 253–263 are enriched in polar residues; sequence GTTSPPIRKSS. Residues 293–295 carry the Integrin-binding motif motif; sequence RGD. A sulfotyrosine mark is found at Tyr320 and Tyr321.

Monomer. Interacts with integrins; the interaction promotes cell adhesion.

The protein localises to the secreted. In terms of biological role, binds tightly to hydroxyapatite. Appears to form an integral part of the mineralized matrix. Probably important to cell-matrix interaction. Promotes adhesion and migration of various cells via the alpha-V/beta-3 integrin receptor (ITGAV:ITGB3). This is Integrin-binding sialoprotein (Ibsp) from Mus musculus (Mouse).